Reading from the N-terminus, the 118-residue chain is NLIQFSELIQCANKGKRATYYYMDYGCYCGKGGSGTPVDDLDRCCKTHDDCYGQAEKKGCFPFLTLYNFICFPGGPTCDRGTTCQRFVCDCDIQAAFCFARSPYNNKNYNINISKRCK.

Disulfide bonds link Cys-11-Cys-71, Cys-27-Cys-117, Cys-29-Cys-45, Cys-44-Cys-98, Cys-51-Cys-91, Cys-60-Cys-84, and Cys-78-Cys-89. Ca(2+)-binding residues include Tyr-28, Gly-30, and Gly-32. His-48 is an active-site residue. Residue Asp-49 coordinates Ca(2+). Asp-92 is a catalytic residue.

Belongs to the phospholipase A2 family. Group I subfamily. D49 sub-subfamily. Requires Ca(2+) as cofactor. As to expression, expressed by the venom gland.

Its subcellular location is the secreted. The enzyme catalyses a 1,2-diacyl-sn-glycero-3-phosphocholine + H2O = a 1-acyl-sn-glycero-3-phosphocholine + a fatty acid + H(+). Functionally, snake venom phospholipase A2 (PLA2) that inhibits neuromuscular transmission by blocking acetylcholine release from the nerve termini. PLA2 catalyzes the calcium-dependent hydrolysis of the 2-acyl groups in 3-sn-phosphoglycerides. In Laticauda colubrina (Yellow-lipped sea krait), this protein is Basic phospholipase A2 2.